A 429-amino-acid chain; its full sequence is Ribosomal RNA small subunit methyltransferase B (429 aa).

Residues 254–260, Asp277, Asp303, and Asp322 each bind S-adenosyl-L-methionine; that span reads CAAPGGK. Catalysis depends on Cys375, which acts as the Nucleophile.

It belongs to the class I-like SAM-binding methyltransferase superfamily. RsmB/NOP family.

It localises to the cytoplasm. It carries out the reaction cytidine(967) in 16S rRNA + S-adenosyl-L-methionine = 5-methylcytidine(967) in 16S rRNA + S-adenosyl-L-homocysteine + H(+). In terms of biological role, specifically methylates the cytosine at position 967 (m5C967) of 16S rRNA. The sequence is that of Ribosomal RNA small subunit methyltransferase B from Serratia proteamaculans (strain 568).